We begin with the raw amino-acid sequence, 1477 residues long: Inositol hexakisphosphate and diphosphoinositol-pentakisphosphate kinase 1 (1477 aa).

Residues 27–47 are disordered; sequence TRGLGMRPEESDSELLEDEED. Positions 37-47 are enriched in acidic residues; sequence SDSELLEDEED. 64–65 provides a ligand contact to substrate; that stretch reads KK. Residues R145, K198, H205, R224, 248 to 251, and 257 to 259 contribute to the ATP site; these read EEFM and DVK. 224 to 225 serves as a coordination point for substrate; that stretch reads RK. Positions 259 and 273 each coordinate substrate. ATP is bound by residues S275, D320, and 332-334; that span reads DVN. Position 337-340 (337-340) interacts with substrate; it reads SFVK. Positions 382–453 are polyphosphoinositide-binding domain; sequence PTTSGTMMEL…VLDITRLLLA (72 aa). Residues 910 to 1016 form a disordered region; sequence KGVEEEGSAP…PTEMKQSGLG (107 aa). Residues S940 and S983 each carry the phosphoserine modification. The segment covering 1001-1016 has biased composition (polar residues); that stretch reads FSSSRPPTEMKQSGLG. Residues S1033, S1069, S1141, and S1148 each carry the phosphoserine modification. 2 disordered regions span residues 1131–1248 and 1438–1477; these read HSNQ…KPCQ and REEV…SFSH. Residues 1164–1182 show a composition bias toward low complexity; it reads SSGPSSTVSSAGPSSPTAV. Residues 1446–1460 show a composition bias toward polar residues; that stretch reads CPPSNANPQSQSLAP.

It belongs to the histidine acid phosphatase family. VIP1 subfamily.

The protein localises to the cytoplasm. It is found in the cytosol. Its subcellular location is the cell membrane. It carries out the reaction 1D-myo-inositol hexakisphosphate + ATP = 1-diphospho-1D-myo-inositol 2,3,4,5,6-pentakisphosphate + ADP. The catalysed reaction is 5-diphospho-1D-myo-inositol 1,2,3,4,6-pentakisphosphate + ATP + H(+) = 1,5-bis(diphospho)-1D-myo-inositol 2,3,4,6-tetrakisphosphate + ADP. Its function is as follows. Bifunctional inositol kinase that acts in concert with the IP6K kinases IP6K1, IP6K2 and IP6K3 to synthesize the diphosphate group-containing inositol pyrophosphates diphosphoinositol pentakisphosphate, PP-InsP5, and bis-diphosphoinositol tetrakisphosphate, (PP)2-InsP4. PP-InsP5 and (PP)2-InsP4, also respectively called InsP7 and InsP8, regulate a variety of cellular processes, including apoptosis, vesicle trafficking, cytoskeletal dynamics, exocytosis, insulin signaling and neutrophil activation. Phosphorylates inositol hexakisphosphate (InsP6) at position 1 to produce PP-InsP5 which is in turn phosphorylated by IP6Ks to produce (PP)2-InsP4. Alternatively, phosphorylates PP-InsP5 at position 1, produced by IP6Ks from InsP6, to produce (PP)2-InsP4. Activated when cells are exposed to hyperosmotic stress. This is Inositol hexakisphosphate and diphosphoinositol-pentakisphosphate kinase 1 from Bos taurus (Bovine).